The chain runs to 117 residues: Large ribosomal subunit protein bL20 (117 aa).

This sequence belongs to the bacterial ribosomal protein bL20 family.

In terms of biological role, binds directly to 23S ribosomal RNA and is necessary for the in vitro assembly process of the 50S ribosomal subunit. It is not involved in the protein synthesizing functions of that subunit. The chain is Large ribosomal subunit protein bL20 from Wolinella succinogenes (strain ATCC 29543 / DSM 1740 / CCUG 13145 / JCM 31913 / LMG 7466 / NCTC 11488 / FDC 602W) (Vibrio succinogenes).